We begin with the raw amino-acid sequence, 56 residues long: Attractin (56 aa).

3 disulfides stabilise this stretch: cysteine 4-cysteine 41, cysteine 13-cysteine 33, and cysteine 20-cysteine 26. N-linked (GlcNAc...) asparagine glycosylation occurs at asparagine 25.

As to expression, produced by the albumen gland of the egg cordons.

It localises to the secreted. Functionally, water-borne pheromone that attract the marine mollusk Aplysia into breeding aggregations and coordinate male and female reproductive behavior within the aggregation. This chain is Attractin (ATT), found in Aplysia depilans (Sea hare).